The sequence spans 136 residues: ATP synthase epsilon chain (136 aa).

The segment at D95–Q115 is disordered. Positions S101–Q115 are enriched in basic and acidic residues.

This sequence belongs to the ATPase epsilon chain family. In terms of assembly, F-type ATPases have 2 components, CF(1) - the catalytic core - and CF(0) - the membrane proton channel. CF(1) has five subunits: alpha(3), beta(3), gamma(1), delta(1), epsilon(1). CF(0) has three main subunits: a, b and c.

The protein resides in the cellular thylakoid membrane. Its function is as follows. Produces ATP from ADP in the presence of a proton gradient across the membrane. This Rippkaea orientalis (strain PCC 8801 / RF-1) (Cyanothece sp. (strain PCC 8801)) protein is ATP synthase epsilon chain.